The primary structure comprises 187 residues: Small ribosomal subunit protein uS5 (187 aa).

Positions 1–20 (MAERENRRDRRDDRSREETP) are disordered. The 64-residue stretch at 22-85 (FADRLVAINR…EQAKRQMIRV (64 aa)) folds into the S5 DRBM domain.

The protein belongs to the universal ribosomal protein uS5 family. In terms of assembly, part of the 30S ribosomal subunit. Contacts proteins S4 and S8.

In terms of biological role, with S4 and S12 plays an important role in translational accuracy. Located at the back of the 30S subunit body where it stabilizes the conformation of the head with respect to the body. This chain is Small ribosomal subunit protein uS5, found in Cereibacter sphaeroides (strain ATCC 17029 / ATH 2.4.9) (Rhodobacter sphaeroides).